The sequence spans 427 residues: Phosphatase PSR1 (427 aa).

2 S-palmitoyl cysteine lipidation sites follow: Cys-9 and Cys-10. Polar residues predominate over residues 14–34 (TTQSNSNSAYRQQQSSSLNKN). The interval 14-223 (TTQSNSNSAY…SNDADDEDDE (210 aa)) is disordered. The segment covering 35-48 (RSVKHSNTKSRTRG) has biased composition (basic residues). The segment covering 49–80 (VHQTNSPPSKTNSAATFSSTERSTGKSGISTN) has biased composition (polar residues). Residues 104 to 118 (KVEKRISKDDLYEEK) are compositionally biased toward basic and acidic residues. Phosphoserine is present on Ser-110. Positions 119–130 (YEVDEDEEIDDE) are enriched in acidic residues. Residues 131–151 (DNRRSRGIVQEKGDAVKDTSR) show a composition bias toward basic and acidic residues. A Glycyl lysine isopeptide (Lys-Gly) (interchain with G-Cter in ubiquitin) cross-link involves residue Lys-154. Positions 155–183 (QQQQQQQQSQPQPQPQSQSQSQSQSQSQQ) are enriched in low complexity. Positions 184–214 (RGPTVQVSSDHLIQDMNLSRVSSSSQASETS) are enriched in polar residues. The FCP1 homology domain occupies 253 to 411 (STKGKKCLIL…LDIIPLLEDL (159 aa)).

As to quaternary structure, interacts with WHI2.

The protein resides in the cell membrane. In terms of biological role, has phosphatase activity in vitro. Involved in the response to sodium and lithium ion stress (but not to potassium or sorbitol stress) by inducing transcription of the sodium pump ENA1/PMR2. Acts through a calcineurin-independent pathway and is functionally redundant with PSR2. Also involved in the general stress response; acts together with WHI2 to activate stress response element (STRE)-mediated gene expression, possibly through dephosphorylation of MSN2. The protein is Phosphatase PSR1 (PSR1) of Saccharomyces cerevisiae (strain ATCC 204508 / S288c) (Baker's yeast).